The primary structure comprises 637 residues: Chaperone protein HtpG (637 aa).

The a; substrate-binding stretch occupies residues 1–345 (MSQQETHGFQ…SNDLPLNVSR (345 aa)). The interval 346 to 562 (EILQDNQVTT…EGEMSTQMIK (217 aa)) is b. The c stretch occupies residues 563-637 (LMQAAGQAVP…MNQMLLANAK (75 aa)).

Belongs to the heat shock protein 90 family. As to quaternary structure, homodimer.

It is found in the cytoplasm. Molecular chaperone. Has ATPase activity. The chain is Chaperone protein HtpG from Shewanella denitrificans (strain OS217 / ATCC BAA-1090 / DSM 15013).